Reading from the N-terminus, the 310-residue chain is tRNA dimethylallyltransferase (310 aa).

Residue 13–20 (GPTASGKT) coordinates ATP. Position 15–20 (15–20 (TASGKT)) interacts with substrate. Interaction with substrate tRNA stretches follow at residues 38-41 (DSAL), 162-166 (QRLSR), 243-248 (RCVGYR), and 276-283 (KRQITWLR).

The protein belongs to the IPP transferase family. In terms of assembly, monomer. Requires Mg(2+) as cofactor.

It carries out the reaction adenosine(37) in tRNA + dimethylallyl diphosphate = N(6)-dimethylallyladenosine(37) in tRNA + diphosphate. Catalyzes the transfer of a dimethylallyl group onto the adenine at position 37 in tRNAs that read codons beginning with uridine, leading to the formation of N6-(dimethylallyl)adenosine (i(6)A). The polypeptide is tRNA dimethylallyltransferase (Vibrio campbellii (strain ATCC BAA-1116)).